The sequence spans 1445 residues: Protein HUA2-LIKE 1 (1445 aa).

Residues L20–E77 form the PWWP domain. 7 disordered regions span residues K133–P197, T211–I302, F319–L356, E409–D439, D460–S491, G641–P685, and L797–G835. Composition is skewed to polar residues over residues Q173 to S187 and T211 to N225. 3 stretches are compositionally biased toward basic and acidic residues: residues R228–T257, G274–D293, and D331–Q350. Composition is skewed to polar residues over residues R660–S673 and L797–T814. The 142-residue stretch at E838–G979 folds into the CID domain. Positions P1110 to P1203 are disordered. Residues G1124–P1170 are compositionally biased toward pro residues.

Expressed throughout young primordia, and vegetative and reproductive apices.

The protein localises to the nucleus. Probable transcription factor that acts with partial redundancy with HULK2 and HULK3. Plays diverse and essential roles in the control of plant development, physiology and flowering time. In Arabidopsis thaliana (Mouse-ear cress), this protein is Protein HUA2-LIKE 1.